Reading from the N-terminus, the 139-residue chain is Putative lipoprotein MIP_01412 (139 aa).

Positions 1 to 19 (MRNRTVAAGAVLTAALLGA) are cleaved as a signal peptide. Cysteine 20 is lipidated: N-palmitoyl cysteine. Cysteine 20 is lipidated: S-diacylglycerol cysteine.

The protein belongs to the mycobacterial 19 kDa antigen family.

The protein localises to the cell membrane. This is Putative lipoprotein MIP_01412 from Mycobacterium indicus pranii (strain DSM 45239 / MTCC 9506).